Here is a 502-residue protein sequence, read N- to C-terminus: Mannitol 2-dehydrogenase (502 aa).

I37–A48 serves as a coordination point for NAD(+).

It belongs to the mannitol dehydrogenase family. Monomer.

It carries out the reaction D-mannitol + NAD(+) = D-fructose + NADH + H(+). In terms of biological role, catalyzes the NAD(H)-dependent interconversion of D-fructose and D-mannitol in the mannitol metabolic pathway. The protein is Mannitol 2-dehydrogenase of Neosartorya fischeri (strain ATCC 1020 / DSM 3700 / CBS 544.65 / FGSC A1164 / JCM 1740 / NRRL 181 / WB 181) (Aspergillus fischerianus).